The chain runs to 259 residues: Undecaprenyl-diphosphatase (259 aa).

The next 7 helical transmembrane spans lie at 1–21, 40–60, 75–95, 101–121, 179–199, 206–226, and 239–259; these read MEIF…FLPI, QITL…IIFW, WLTI…ILFE, LFSS…LLYL, SFLL…KDAL, LTWL…YFAI, and TVFA…AGIF.

The protein belongs to the UppP family.

It is found in the cell inner membrane. It carries out the reaction di-trans,octa-cis-undecaprenyl diphosphate + H2O = di-trans,octa-cis-undecaprenyl phosphate + phosphate + H(+). Functionally, catalyzes the dephosphorylation of undecaprenyl diphosphate (UPP). Confers resistance to bacitracin. The chain is Undecaprenyl-diphosphatase from Halothermothrix orenii (strain H 168 / OCM 544 / DSM 9562).